We begin with the raw amino-acid sequence, 482 residues long: MSFKGFTKAVSRAPQSFRQKFKMGEQTEDPVYEDAERRFQELEQETKKLSEESKRYSTAVNGMLTHQIGFAKSMEEIFKPISGKMSDPNATIPEDNPQGIEASEQYRAIVAELQETLKPDLALVEEKIVTPCQELLKIITYIRKMATKRNHKKLDLDRHLNTYNKHEKKKEPTAKDEERLYKAQAQVEVAQQEYDYYNDLLKTQLPILFSLEAEFVKPLFVSFYFMQLNIFYTLYNRLQDMKIPYFDLNSDIVESYIAKKGNVEEQTDALTITHFKLGYSKAKLEMTRRKYGVATAEGSPVSGASSGVGYGAGYDPATATSPTPTGYGYGAAAPSYAAQPAAQYGTAAAVGTAAAVGTAAGAAAGAVPGTYPQYAAAQSPPLTGLGFQQSPQQQQGPPPAYSNPLTSPVAGTPAAAVAAAPGVETVTALYDYQAQAAGDLSFPAGAVIEIVQRTPDVNEWWTGRYNGQQGVFPGNYVQLNKN.

Serine 2 is subject to N-acetylserine. The BAR domain maps to 17-254 (FRQKFKMGEQ…YFDLNSDIVE (238 aa)). Coiled coils occupy residues 31–64 (VYED…NGML) and 174–204 (AKDE…LKTQ). A Glycyl lysine isopeptide (Lys-Gly) (interchain with G-Cter in ubiquitin) cross-link involves residue lysine 242. Phosphoserine; by FUS3 and PHO85 occurs at positions 299, 321, and 379. Residues 382–407 (LTGLGFQQSPQQQQGPPPAYSNPLTS) form a disordered region. One can recognise an SH3 domain in the interval 421–482 (PGVETVTALY…PGNYVQLNKN (62 aa)). Lysine 481 participates in a covalent cross-link: Glycyl lysine isopeptide (Lys-Gly) (interchain with G-Cter in ubiquitin).

In terms of assembly, binds to actin. Interacts with ABP1, GYL1, GYP5, PCL2 and YBR108W. Phosphorylated redundantly by cyclin-dependent kinase PHO85 in association with PCL1,2-type cyclins or by MAP kinase FUS3. Phosphorylation inhibits interaction with complexes involved in actin cytoskeleton function.

The protein localises to the cytoplasm. The protein resides in the cytoskeleton. In terms of biological role, component of a cytoskeletal structure that is required for the formation of endocytic vesicles at the plasma membrane level. Could be implicated in cytoskeletal reorganization in response to environmental stresses and could act in the budding site selection mechanism. In Saccharomyces cerevisiae (strain ATCC 204508 / S288c) (Baker's yeast), this protein is Reduced viability upon starvation protein 167 (RVS167).